Reading from the N-terminus, the 308-residue chain is Tyrosine recombinase XerD (308 aa).

Residues 13–97 (PSSTEAIQRF…VFKRFFQWAL (85 aa)) enclose the Core-binding (CB) domain. The 185-residue stretch at 118–302 (RVPKTLSEAQ…ARERLRTLHA (185 aa)) folds into the Tyr recombinase domain. Residues Arg158, Lys183, His254, Arg257, and His280 contribute to the active site. Residue Tyr289 is the O-(3'-phospho-DNA)-tyrosine intermediate of the active site.

Belongs to the 'phage' integrase family. XerD subfamily. Forms a cyclic heterotetrameric complex composed of two molecules of XerC and two molecules of XerD.

The protein resides in the cytoplasm. Functionally, site-specific tyrosine recombinase, which acts by catalyzing the cutting and rejoining of the recombining DNA molecules. The XerC-XerD complex is essential to convert dimers of the bacterial chromosome into monomers to permit their segregation at cell division. It also contributes to the segregational stability of plasmids. This chain is Tyrosine recombinase XerD, found in Ralstonia nicotianae (strain ATCC BAA-1114 / GMI1000) (Ralstonia solanacearum).